The primary structure comprises 337 residues: N-acetyl-gamma-glutamyl-phosphate reductase (337 aa).

The active site involves Cys-155.

The protein belongs to the NAGSA dehydrogenase family. Type 1 subfamily.

The protein resides in the cytoplasm. The enzyme catalyses N-acetyl-L-glutamate 5-semialdehyde + phosphate + NADP(+) = N-acetyl-L-glutamyl 5-phosphate + NADPH + H(+). Its pathway is amino-acid biosynthesis; L-arginine biosynthesis; N(2)-acetyl-L-ornithine from L-glutamate: step 3/4. Its function is as follows. Catalyzes the NADPH-dependent reduction of N-acetyl-5-glutamyl phosphate to yield N-acetyl-L-glutamate 5-semialdehyde. The sequence is that of N-acetyl-gamma-glutamyl-phosphate reductase from Alteromonas mediterranea (strain DSM 17117 / CIP 110805 / LMG 28347 / Deep ecotype).